A 260-amino-acid polypeptide reads, in one-letter code: Ribonuclease 3 (260 aa).

The RNase III domain maps to 16–145; it reads VQLLESRLGL…VFGAVFLTSG (130 aa). Position 58 (E58) interacts with Mg(2+). Residue D62 is part of the active site. D131 and E134 together coordinate Mg(2+). The active site involves E134. Positions 172 to 241 constitute a DRBM domain; sequence DYKTLLQEMA…AQATLEKLRE (70 aa). The segment at 219-260 is disordered; sequence ATGRSKKEAEQSAAQATLEKLREDAACPTSPPPGTPRHDTPA.

It belongs to the ribonuclease III family. Homodimer. It depends on Mg(2+) as a cofactor.

The protein resides in the cytoplasm. It carries out the reaction Endonucleolytic cleavage to 5'-phosphomonoester.. Digests double-stranded RNA. Involved in the processing of primary rRNA transcript to yield the immediate precursors to the large and small rRNAs (23S and 16S). Processes some mRNAs, and tRNAs when they are encoded in the rRNA operon. Processes pre-crRNA and tracrRNA of type II CRISPR loci if present in the organism. This Myxococcus xanthus (strain DK1622) protein is Ribonuclease 3.